Here is a 349-residue protein sequence, read N- to C-terminus: Isopentenyl-diphosphate delta-isomerase (349 aa).

A substrate-binding site is contributed by Arg-6–Lys-7. FMN contacts are provided by residues Ala-62–Thr-64, Ser-93, and Asn-122. Gln-152 contributes to the substrate binding site. Residue Glu-153 participates in Mg(2+) binding. FMN-binding positions include Lys-184, Thr-214, Gly-258–Gly-259, and Ala-280–Gly-281.

Belongs to the IPP isomerase type 2 family. Homooctamer. Dimer of tetramers. FMN serves as cofactor. It depends on NADPH as a cofactor. Mg(2+) is required as a cofactor.

The protein resides in the cytoplasm. The enzyme catalyses isopentenyl diphosphate = dimethylallyl diphosphate. Functionally, involved in the biosynthesis of isoprenoids. Catalyzes the 1,3-allylic rearrangement of the homoallylic substrate isopentenyl (IPP) to its allylic isomer, dimethylallyl diphosphate (DMAPP). The polypeptide is Isopentenyl-diphosphate delta-isomerase (Bacillus cereus (strain AH820)).